We begin with the raw amino-acid sequence, 417 residues long: Serine hydroxymethyltransferase (417 aa).

Residues leucine 122 and 126–128 (GHL) each bind (6S)-5,6,7,8-tetrahydrofolate. Lysine 231 carries the N6-(pyridoxal phosphate)lysine modification.

Belongs to the SHMT family. Homodimer. Pyridoxal 5'-phosphate serves as cofactor.

The protein resides in the cytoplasm. It carries out the reaction (6R)-5,10-methylene-5,6,7,8-tetrahydrofolate + glycine + H2O = (6S)-5,6,7,8-tetrahydrofolate + L-serine. Its pathway is one-carbon metabolism; tetrahydrofolate interconversion. The protein operates within amino-acid biosynthesis; glycine biosynthesis; glycine from L-serine: step 1/1. In terms of biological role, catalyzes the reversible interconversion of serine and glycine with tetrahydrofolate (THF) serving as the one-carbon carrier. This reaction serves as the major source of one-carbon groups required for the biosynthesis of purines, thymidylate, methionine, and other important biomolecules. Also exhibits THF-independent aldolase activity toward beta-hydroxyamino acids, producing glycine and aldehydes, via a retro-aldol mechanism. This chain is Serine hydroxymethyltransferase, found in Caldicellulosiruptor saccharolyticus (strain ATCC 43494 / DSM 8903 / Tp8T 6331).